A 293-amino-acid polypeptide reads, in one-letter code: 1D-myo-inositol 2-acetamido-2-deoxy-alpha-D-glucopyranoside deacetylase (293 aa).

Zn(2+) is bound by residues His-15, Asp-18, and His-148.

It belongs to the MshB deacetylase family. It depends on Zn(2+) as a cofactor.

The enzyme catalyses 1D-myo-inositol 2-acetamido-2-deoxy-alpha-D-glucopyranoside + H2O = 1D-myo-inositol 2-amino-2-deoxy-alpha-D-glucopyranoside + acetate. In terms of biological role, catalyzes the deacetylation of 1D-myo-inositol 2-acetamido-2-deoxy-alpha-D-glucopyranoside (GlcNAc-Ins) in the mycothiol biosynthesis pathway. The chain is 1D-myo-inositol 2-acetamido-2-deoxy-alpha-D-glucopyranoside deacetylase from Corynebacterium diphtheriae (strain ATCC 700971 / NCTC 13129 / Biotype gravis).